The sequence spans 339 residues: NADH-quinone oxidoreductase subunit H (339 aa).

Transmembrane regions (helical) follow at residues 19-39, 87-107, 120-140, 153-173, 191-211, 253-273, 275-295, and 310-330; these read LLKI…LTLA, FLLG…VVPF, LLYI…AGWA, SAAQ…GVLM, FWEW…ISAV, ILVA…PVPF, PDSI…FLWF, and LGWK…GAMM.

The protein belongs to the complex I subunit 1 family. As to quaternary structure, NDH-1 is composed of 14 different subunits. Subunits NuoA, H, J, K, L, M, N constitute the membrane sector of the complex.

It is found in the cell inner membrane. The catalysed reaction is a quinone + NADH + 5 H(+)(in) = a quinol + NAD(+) + 4 H(+)(out). In terms of biological role, NDH-1 shuttles electrons from NADH, via FMN and iron-sulfur (Fe-S) centers, to quinones in the respiratory chain. The immediate electron acceptor for the enzyme in this species is believed to be ubiquinone. Couples the redox reaction to proton translocation (for every two electrons transferred, four hydrogen ions are translocated across the cytoplasmic membrane), and thus conserves the redox energy in a proton gradient. This subunit may bind ubiquinone. The chain is NADH-quinone oxidoreductase subunit H from Methylobacillus flagellatus (strain ATCC 51484 / DSM 6875 / VKM B-1610 / KT).